Consider the following 100-residue polypeptide: MSSQFLLAFFLVLLVLGYEVQGAQGLQQDDPGSPALFGKVQESISSYWDTAKAAAQELYQKTYLTSVDEKLRDMYSKSSAAMSTYAGIFTDQLFTLLKGE.

Positions 1–22 are cleaved as a signal peptide; it reads MSSQFLLAFFLVLLVLGYEVQG. The lipid binding stretch occupies residues 66-74; the sequence is SVDEKLRDM. The tract at residues 78 to 100 is lipoprotein lipase cofactor; that stretch reads SSAAMSTYAGIFTDQLFTLLKGE.

This sequence belongs to the apolipoprotein C2 family. Post-translationally, proapolipoprotein C-II is synthesized as a sialic acid containing glycoprotein which is subsequently desialylated prior to its proteolytic processing. Proapolipoprotein C-II, the major form found in plasma undergoes proteolytic cleavage of its N-terminal hexapeptide to generate the mature form apolipoprotein C-II, which occurs as the minor form in plasma.

It is found in the secreted. Component of chylomicrons, very low-density lipoproteins (VLDL), low-density lipoproteins (LDL), and high-density lipoproteins (HDL) in plasma. Plays an important role in lipoprotein metabolism as an activator of lipoprotein lipase. In Cricetulus griseus (Chinese hamster), this protein is Apolipoprotein C-II (APOC2).